A 398-amino-acid chain; its full sequence is MAKEKYDRSKPHVNIGTIGHVDHGKTTLTAAITTVLARRLPSSVNQPKDYASIDAAPEERERGITINTAHVEYETATRHYAHIDAPGHADYVKNMITGAAQMDGAILVVASTDGPMPQTREHILLSRQVGVKHLIVFMNKVDLVDDEELLELVEMEIRDLLSEYDFPGDDLPVIQGSALKALEGDTKFEDIIMELMDTVDSYIPEPERDTDKPLLLPVEDVFSITGRGTVASGRIDRGTVRVNDEIEIVGIKEETKKAVVTGVEMFRKQLDEGLAGDNVGILLRGVQRDEIERGQVIAKPGSINPHTKFKGEVYILSKDEGGRHTPFFNNYRPQFYFRTTDVTGSIELPAGTEMVMPGDNVTINVELIHPIAVEQGTTFSIREGGRTVGSGIVSEIEA.

Residues 10 to 207 (KPHVNIGTIG…TVDSYIPEPE (198 aa)) form the tr-type G domain. The G1 stretch occupies residues 19–26 (GHVDHGKT). GTP is bound at residue 19–26 (GHVDHGKT). Threonine 26 lines the Mg(2+) pocket. Positions 63–67 (GITIN) are G2. The interval 84 to 87 (DAPG) is G3. GTP contacts are provided by residues 84–88 (DAPGH) and 139–142 (NKVD). Positions 139–142 (NKVD) are G4. The G5 stretch occupies residues 177–179 (SAL).

Belongs to the TRAFAC class translation factor GTPase superfamily. Classic translation factor GTPase family. EF-Tu/EF-1A subfamily. In terms of assembly, monomer.

The protein localises to the cytoplasm. The enzyme catalyses GTP + H2O = GDP + phosphate + H(+). In terms of biological role, GTP hydrolase that promotes the GTP-dependent binding of aminoacyl-tRNA to the A-site of ribosomes during protein biosynthesis. This chain is Elongation factor Tu, found in Streptococcus pyogenes serotype M28 (strain MGAS6180).